Consider the following 582-residue polypeptide: External alternative NAD(P)H-ubiquinone oxidoreductase B4, mitochondrial (582 aa).

A mitochondrion-targeting transit peptide spans 1-39 (MSFHSFYQRASSLFKAYPSTSKILLLSTFSGGGGVLVYS). Residue 65–95 (KVVVLGSGWSGYSFLSYLNNPNYDVQVVSPR) participates in FAD binding. An NAD(+)-binding site is contributed by 227–263 (LHFVVVGGGPTGVEFSAELHDFLVQDVAKIYPKVQEF). In terms of domain architecture, EF-hand spans 384–419 (RVMEDIAAIFNKADKGNTGTLKKKDFNSVVKDICQR). Ca(2+) is bound by residues D397, T401, T403, and D408. The Microbody targeting signal signature appears at 573 to 582 (FVFGRDSSSI).

The protein belongs to the NADH dehydrogenase family. FAD serves as cofactor. As to expression, expressed in seedlings, roots, cotyledons, stems, buds and flowers and, to a lower extent, in stems and leaves.

It is found in the mitochondrion inner membrane. Its subcellular location is the peroxisome. The enzyme catalyses a quinone + NADH + H(+) = a quinol + NAD(+). The catalysed reaction is a ubiquinone + NADH + H(+) = a ubiquinol + NAD(+). No effect of calcium ions on activity. Functionally, alternative NADH-ubiquinone oxidoreductase which catalyzes the oxidation of mitochondrial NADH does not translocate protons across the inner mitochondrial membrane. NAD(P)H dehydrogenase; more efficient on NADH. The chain is External alternative NAD(P)H-ubiquinone oxidoreductase B4, mitochondrial (NDB4) from Arabidopsis thaliana (Mouse-ear cress).